A 199-amino-acid polypeptide reads, in one-letter code: MLKLKICGIKDEKNAKDLAFLNIDFFGLIFAKSPRRVSLEQARNLSAIFHEKDKKVVGVFVDENLEQILRCIKEAKLDGIQIYRTITKEEFEILKVQNVFVWQVISVENSLDLKSEIFANLVLFDAKGILKGGNGISFDWTLLGSYTKDFILAGGIGLDNVHKAVKTGAKILDLNSKLEDEKGLKDINKIKQILKELKK.

The protein belongs to the TrpF family.

It carries out the reaction N-(5-phospho-beta-D-ribosyl)anthranilate = 1-(2-carboxyphenylamino)-1-deoxy-D-ribulose 5-phosphate. It functions in the pathway amino-acid biosynthesis; L-tryptophan biosynthesis; L-tryptophan from chorismate: step 3/5. The polypeptide is N-(5'-phosphoribosyl)anthranilate isomerase (Campylobacter jejuni subsp. jejuni serotype O:2 (strain ATCC 700819 / NCTC 11168)).